Here is a 513-residue protein sequence, read N- to C-terminus: Maturase K (513 aa).

It belongs to the intron maturase 2 family. MatK subfamily.

The protein localises to the plastid. Its subcellular location is the chloroplast. Functionally, usually encoded in the trnK tRNA gene intron. Probably assists in splicing its own and other chloroplast group II introns. The protein is Maturase K of Eleusine indica (Goosegrass).